The primary structure comprises 507 residues: Congo red hypersensitive protein 1 (507 aa).

Residues 1–22 (MKVLDLLTVLSASSLLSTFAAA) form the signal peptide. One can recognise a GH16 domain in the interval 34-260 (ASSTASCNPL…KVIVTDYSTG (227 aa)). A disulfide bridge connects residues Cys-40 and Cys-48. Asn-117 carries N-linked (GlcNAc...) asparagine glycosylation. Residue Glu-134 is the Nucleophile of the active site. Glu-138 serves as the catalytic Proton donor. Chitin is bound at residue Glu-138. N-linked (GlcNAc...) asparagine glycans are attached at residues Asn-177 and Asn-201. Chitin is bound by residues Trp-219 and Thr-230. Disordered regions lie at residues 329–368 (SSSA…SSKT) and 381–478 (SSFE…TNSV). Composition is skewed to low complexity over residues 381–439 (SSFE…PVQD) and 451–477 (TSST…STNS). A lipid anchor (GPI-anchor amidated asparagine) is attached at Asn-482. A propeptide spans 483-507 (GADLAQSLPREGKLFSVLVALLALL) (removed in mature form).

It belongs to the glycosyl hydrolase 16 family. CRH1 subfamily. Post-translationally, the GPI-anchor is attached to the protein in the endoplasmic reticulum and serves to target the protein to the cell surface. There, the glucosamine-inositol phospholipid moiety is cleaved off and the GPI-modified mannoprotein is covalently attached via its lipidless GPI glycan remnant to the 1,6-beta-glucan of the outer cell wall layer.

Its subcellular location is the secreted. It localises to the cell wall. The protein localises to the membrane. The catalysed reaction is Random endo-hydrolysis of N-acetyl-beta-D-glucosaminide (1-&gt;4)-beta-linkages in chitin and chitodextrins.. Dual chitinase/transglycosylase that plays a role in cell wall architecture. Chitinase and transglycosylase activities are coupled. Required for the polysaccharide cross-linking at the septa and the cell wall. More specifically, transfers chitin to both beta(1-3)- and beta(1-6)glucan in the cell wall. The minimal number of intact hexopyranose units required in the molecule of the acceptor oligosaccharide is two and the effectivity of the acceptor increased with the increasing length of its oligosaccharide chain. This chain is Congo red hypersensitive protein 1, found in Saccharomyces cerevisiae (strain ATCC 204508 / S288c) (Baker's yeast).